The sequence spans 370 residues: Lipoyl synthase, mitochondrial (370 aa).

[4Fe-4S] cluster is bound by residues Cys104, Cys109, Cys115, Cys135, Cys139, Cys142, and Ser350. Residues 118–339 enclose the Radical SAM core domain; that stretch reads GGDKSKATAT…KQKALELGFL (222 aa).

It belongs to the radical SAM superfamily. Lipoyl synthase family. It depends on [4Fe-4S] cluster as a cofactor.

The protein resides in the mitochondrion. The enzyme catalyses [[Fe-S] cluster scaffold protein carrying a second [4Fe-4S](2+) cluster] + N(6)-octanoyl-L-lysyl-[protein] + 2 oxidized [2Fe-2S]-[ferredoxin] + 2 S-adenosyl-L-methionine + 4 H(+) = [[Fe-S] cluster scaffold protein] + N(6)-[(R)-dihydrolipoyl]-L-lysyl-[protein] + 4 Fe(3+) + 2 hydrogen sulfide + 2 5'-deoxyadenosine + 2 L-methionine + 2 reduced [2Fe-2S]-[ferredoxin]. Its pathway is protein modification; protein lipoylation via endogenous pathway; protein N(6)-(lipoyl)lysine from octanoyl-[acyl-carrier-protein]: step 2/2. In terms of biological role, catalyzes the radical-mediated insertion of two sulfur atoms into the C-6 and C-8 positions of the octanoyl moiety bound to the lipoyl domains of lipoate-dependent enzymes, thereby converting the octanoylated domains into lipoylated derivatives. The polypeptide is Lipoyl synthase, mitochondrial (Kluyveromyces lactis (strain ATCC 8585 / CBS 2359 / DSM 70799 / NBRC 1267 / NRRL Y-1140 / WM37) (Yeast)).